The primary structure comprises 876 residues: DDB1- and CUL4-associated factor 6 (876 aa).

5 WD repeats span residues valine 49–threonine 88, glycine 92–arginine 133, cysteine 139–lysine 179, asparagine 189–threonine 229, and asparagine 251–leucine 290. Basic and acidic residues-rich tracts occupy residues arginine 288 to arginine 303 and leucine 312 to glutamate 334. Disordered regions lie at residues arginine 288–serine 340, glutamate 355–asparagine 391, leucine 408–threonine 485, tryptophan 498–leucine 645, and glutamate 658–aspartate 691. At serine 336 the chain carries Phosphoserine. 2 stretches are compositionally biased toward polar residues: residues threonine 375 to asparagine 391 and glutamine 409 to alanine 422. A compositionally biased stretch (basic and acidic residues) spans histidine 456–serine 466. Residues serine 499–serine 510 are compositionally biased toward low complexity. A compositionally biased stretch (basic and acidic residues) spans serine 534–glutamate 544. Polar residues-rich tracts occupy residues glutamate 550 to leucine 562, aspartate 571 to serine 584, glutamate 603 to histidine 613, and proline 621 to leucine 645. Serine 665 is modified (phosphoserine). The residue at position 670 (threonine 670) is a Phosphothreonine. The residue at position 673 (serine 673) is a Phosphoserine. In terms of domain architecture, IQ spans arginine 692–arginine 721. WD repeat units follow at residues asparagine 734 to leucine 772 and alanine 775 to asparagine 814. Serine 863 and serine 866 each carry phosphoserine.

As to quaternary structure, interacts with the nuclear receptors NR3C1 and AR in the presence of ligand. Interacts with DDB1, CUL4A and CUL4B.

The protein resides in the nucleus. Its pathway is protein modification; protein ubiquitination. Ligand-dependent coactivator of nuclear receptors. Enhance transcriptional activity of the nuclear receptors NR3C1 and AR. May function as a substrate receptor for CUL4-DDB1 E3 ubiquitin-protein ligase complex. This Mus musculus (Mouse) protein is DDB1- and CUL4-associated factor 6 (Dcaf6).